The following is a 366-amino-acid chain: 3-dehydroquinate synthase (366 aa).

NAD(+)-binding positions include 69-74, 103-107, 127-128, K140, and K149; these read DGEAYK, GVIGD, and TT. Residues E182, H245, and H262 each coordinate Zn(2+).

Belongs to the sugar phosphate cyclases superfamily. Dehydroquinate synthase family. Co(2+) is required as a cofactor. It depends on Zn(2+) as a cofactor. The cofactor is NAD(+).

It localises to the cytoplasm. It carries out the reaction 7-phospho-2-dehydro-3-deoxy-D-arabino-heptonate = 3-dehydroquinate + phosphate. It participates in metabolic intermediate biosynthesis; chorismate biosynthesis; chorismate from D-erythrose 4-phosphate and phosphoenolpyruvate: step 2/7. In terms of biological role, catalyzes the conversion of 3-deoxy-D-arabino-heptulosonate 7-phosphate (DAHP) to dehydroquinate (DHQ). This chain is 3-dehydroquinate synthase, found in Pseudomonas fluorescens (strain ATCC BAA-477 / NRRL B-23932 / Pf-5).